We begin with the raw amino-acid sequence, 94 residues long: Co-chaperonin GroES (94 aa).

It belongs to the GroES chaperonin family. In terms of assembly, heptamer of 7 subunits arranged in a ring. Interacts with the chaperonin GroEL.

It localises to the cytoplasm. Its function is as follows. Together with the chaperonin GroEL, plays an essential role in assisting protein folding. The GroEL-GroES system forms a nano-cage that allows encapsulation of the non-native substrate proteins and provides a physical environment optimized to promote and accelerate protein folding. GroES binds to the apical surface of the GroEL ring, thereby capping the opening of the GroEL channel. The chain is Co-chaperonin GroES from Shouchella clausii (strain KSM-K16) (Alkalihalobacillus clausii).